A 148-amino-acid chain; its full sequence is UPF0756 membrane protein YeaL (148 aa).

Transmembrane regions (helical) follow at residues 14 to 34 (ALGF…LIIV), 51 to 71 (LTVG…SGTL), 86 to 106 (LVAI…VALM), and 121 to 141 (VLGV…AGLV).

The protein belongs to the UPF0756 family.

The protein resides in the cell membrane. In Salmonella arizonae (strain ATCC BAA-731 / CDC346-86 / RSK2980), this protein is UPF0756 membrane protein YeaL.